A 217-amino-acid chain; its full sequence is Ribonuclease HII (217 aa).

The RNase H type-2 domain maps to 27–216 (SQVAGVDEAG…VKESIQEGVC (190 aa)). Aspartate 33, glutamate 34, and aspartate 126 together coordinate a divalent metal cation.

Belongs to the RNase HII family. The cofactor is Mn(2+). Requires Mg(2+) as cofactor.

Its subcellular location is the cytoplasm. It catalyses the reaction Endonucleolytic cleavage to 5'-phosphomonoester.. Its function is as follows. Endonuclease that specifically degrades the RNA of RNA-DNA hybrids. The sequence is that of Ribonuclease HII (rnhB) from Chlamydia trachomatis serovar D (strain ATCC VR-885 / DSM 19411 / UW-3/Cx).